We begin with the raw amino-acid sequence, 180 residues long: High mobility group protein B1 (180 aa).

The Nuclear localization signal (NLS) 1 signature appears at 1-8 (VNFSEFSK). The HMG box 1 DNA-binding region spans 1–44 (VNFSEFSKKCSERWKTMSAKEKGKFEDMAKADKARYEREMKTYI). K8 is modified (N6-acetyllysine). Isoglutamyl lysine isopeptide (Lys-Gln) (interchain with Q-?) cross-links involve residues K8 and K9. Cysteine sulfonic acid (-SO3H) is present on C10. Residue K33 forms an Isoglutamyl lysine isopeptide (Lys-Gln) (interchain with Q-?) linkage. An LPS binding (Lipid A) region spans residues 45 to 61 (PPKGETKKKFKDPNAPK). Residues 54–73 (FKDPNAPKRPPSAFFLFCSE) are cytokine-stimulating activity. At K55 the chain carries N6-acetyllysine. The segment at residues 60–128 (PKRPPSAFFL…KYEKDIAAYR (69 aa)) is a DNA-binding region (HMG box 2). Position 65 is a phosphoserine (S65). C71 is modified (cysteine sulfonic acid (-SO3H)). Residues K92, K93, K106, K137, K138, K142, and K145 each carry the N6-acetyllysine modification. Residues 115–148 (KLKEKYEKDIAAYRAKGKPDAAKKGVVKAEKSKK) are binding to AGER/RAGE. Over residues 126-144 (AYRAKGKPDAAKKGVVKAE) the composition is skewed to basic and acidic residues. Positions 126-180 (AYRAKGKPDAAKKGVVKAEKSKKKKEEEDDEEDEEDEEEEEEEEDEDEEEDDDDE) are disordered. The short motif at 143–149 (AEKSKKK) is the Nuclear localization signal (NLS) 2 element. An NLS 2 region spans residues 143–149 (AEKSKKK). K145 participates in a covalent cross-link: Isoglutamyl lysine isopeptide (Lys-Gln) (interchain with Q-?). S146 carries the ADP-ribosylserine modification. K147, K148, K149, and K150 each carry N6-acetyllysine. Residues K147, K148, and K149 each participate in an isoglutamyl lysine isopeptide (Lys-Gln) (interchain with Q-?) cross-link. The span at 152–180 (EEDDEEDEEDEEEEEEEEDEDEEEDDDDE) shows a compositional bias: acidic residues.

Belongs to the HMGB family. Interacts (fully reduced HMGB1) with CXCL12; probably in a 1:2 ratio involving two molecules of CXCL12, each interacting with one HMG box of HMGB1; inhibited by glycyrrhizin. Associates with the TLR4:LY96 receptor complex. Component of the RAG complex composed of core components RAG1 and RAG2, and associated component HMGB1 or HMGB2. Interacts (in cytoplasm upon starvation) with BECN1; inhibits the interaction of BECN1 and BCL2 leading to promotion of autophagy. Interacts with KPNA1; involved in nuclear import. Interacts with SREBF1, TLR2, TLR4, TLR9, PTPRZ1, APEX1, FEN1, POLB, TERT. Interacts with IL1B, AGER, MSH2, XPA, XPC, HNF1A, TP53. Interacts with CD24; the probable CD24:SIGLEC10 complex is proposed to inhibit HGMB1-mediated tissue damage immune response. Interacts with THBD; prevents HGMB1 interaction with ACER/RAGE and inhibits HGMB1 pro-inflammatory activity. Interacts with HAVCR2; impairs HMGB1 binding to B-DNA and likely HMGB1-mediated innate immune response. Interacts with XPO1; mediating nuclear export. Interacts with receptor RAGE/AGER. In terms of processing, phosphorylated at serine residues. Phosphorylation in both NLS regions is required for cytoplasmic translocation followed by secretion. Acetylated on multiple sites upon stimulation with LPS. Acetylation on lysine residues in the nuclear localization signals (NLS 1 and NLS 2) leads to cytoplasmic localization and subsequent secretion. Post-translationally, reduction/oxidation of cysteine residues and a possible intramolecular disulfide bond give rise to different redox forms with specific functional activities in various cellular compartments: 1- fully reduced HMGB1 (HMGB1C23hC45hC106h), 2-disulfide HMGB1 (HMGB1C23-C45C106h) and 3- sulfonyl HMGB1 (HMGB1C23soC45soC106so). In terms of processing, poly-ADP-ribosylated by PARP1 when secreted following stimulation with LPS. In vitro cleavage by CASP1 is liberating a HMG box 1-containing peptide which may mediate immunogenic activity; the peptide antagonizes apoptosis-induced immune tolerance. Can be proteolytically cleaved by a thrombin:thrombomodulin complex; reduces binding to heparin and pro-inflammatory activities. Post-translationally, forms covalent cross-links mediated by transglutaminase TGM2, between a glutamine and the epsilon-amino group of a lysine residue, forming homopolymers and heteropolymers.

It localises to the nucleus. The protein localises to the chromosome. Its subcellular location is the cytoplasm. The protein resides in the secreted. It is found in the cell membrane. It localises to the endosome. The protein localises to the endoplasmic reticulum-Golgi intermediate compartment. Functionally, multifunctional redox sensitive protein with various roles in different cellular compartments. In the nucleus is one of the major chromatin-associated non-histone proteins and acts as a DNA chaperone involved in replication, transcription, chromatin remodeling, V(D)J recombination, DNA repair and genome stability. Proposed to be an universal biosensor for nucleic acids. Promotes host inflammatory response to sterile and infectious signals and is involved in the coordination and integration of innate and adaptive immune responses. In the cytoplasm functions as a sensor and/or chaperone for immunogenic nucleic acids implicating the activation of TLR9-mediated immune responses, and mediates autophagy. Acts as a danger-associated molecular pattern (DAMP) molecule that amplifies immune responses during tissue injury. Released to the extracellular environment can bind DNA, nucleosomes, IL-1 beta, CXCL12, AGER isoform 2/sRAGE, lipopolysaccharide (LPS) and lipoteichoic acid (LTA), and activates cells through engagement of multiple surface receptors. In the extracellular compartment fully reduced HMGB1 (released by necrosis) acts as a chemokine, disulfide HMGB1 (actively secreted) as a cytokine, and sulfonyl HMGB1 (released from apoptotic cells) promotes immunological tolerance. Has proangiogenic activity. May be involved in platelet activation. Binds to phosphatidylserine and phosphatidylethanolamide. Bound to RAGE mediates signaling for neuronal outgrowth. May play a role in accumulation of expanded polyglutamine (polyQ) proteins. Its function is as follows. Nuclear functions are attributed to fully reduced HGMB1. Associates with chromatin and binds DNA with a preference to non-canonical DNA structures such as single-stranded DNA, DNA-containing cruciforms or bent structures, supercoiled DNA and ZDNA. Can bent DNA and enhance DNA flexibility by looping thus providing a mechanism to promote activities on various gene promoters by enhancing transcription factor binding and/or bringing distant regulatory sequences into close proximity. May be involved in nucleotide excision repair (NER), mismatch repair (MMR) and base excision repair (BER) pathways, and double strand break repair such as non-homologous end joining (NHEJ). Involved in V(D)J recombination by acting as a cofactor of the RAG complex: acts by stimulating cleavage and RAG protein binding at the 23 bp spacer of conserved recombination signal sequences (RSS). In vitro can displace histone H1 from highly bent DNA. Can restructure the canonical nucleosome leading to relaxation of structural constraints for transcription factor-binding. Enhances binding of sterol regulatory element-binding proteins (SREBPs) such as SREBF1 to their cognate DNA sequences and increases their transcriptional activities. Facilitates binding of TP53 to DNA. May be involved in mitochondrial quality control and autophagy in a transcription-dependent fashion implicating HSPB1. Can modulate the activity of the telomerase complex and may be involved in telomere maintenance. In the cytoplasm proposed to dissociate the BECN1:BCL2 complex via competitive interaction with BECN1 leading to autophagy activation. Can protect BECN1 and ATG5 from calpain-mediated cleavage and thus proposed to control their proautophagic and proapoptotic functions and to regulate the extent and severity of inflammation-associated cellular injury. In myeloid cells has a protective role against endotoxemia and bacterial infection by promoting autophagy. Involved in endosomal translocation and activation of TLR9 in response to CpG-DNA in macrophages. In terms of biological role, in the extracellular compartment (following either active secretion or passive release) involved in regulation of the inflammatory response. Fully reduced HGMB1 (which subsequently gets oxidized after release) in association with CXCL12 mediates the recruitment of inflammatory cells during the initial phase of tissue injury; the CXCL12:HMGB1 complex triggers CXCR4 homodimerization. Induces the migration of monocyte-derived immature dendritic cells and seems to regulate adhesive and migratory functions of neutrophils implicating AGER/RAGE and ITGAM. Can bind to various types of DNA and RNA including microbial unmethylated CpG-DNA to enhance the innate immune response to nucleic acids. Proposed to act in promiscuous DNA/RNA sensing which cooperates with subsequent discriminative sensing by specific pattern recognition receptors. Promotes extracellular DNA-induced AIM2 inflammasome activation implicating AGER/RAGE. Disulfide HMGB1 binds to transmembrane receptors, such as AGER/RAGE, TLR2, TLR4 and probably TREM1, thus activating their signal transduction pathways. Mediates the release of cytokines/chemokines such as TNF, IL-1, IL-6, IL-8, CCL2, CCL3, CCL4 and CXCL10. Promotes secretion of interferon-gamma by macrophage-stimulated natural killer (NK) cells in concert with other cytokines like IL-2 or IL-12. TLR4 is proposed to be the primary receptor promoting macrophage activation and signaling through TLR4 seems to implicate LY96/MD-2. In bacterial LPS- or LTA-mediated inflammatory responses binds to the endotoxins and transfers them to CD14 for signaling to the respective TLR4:LY96 and TLR2 complexes. Contributes to tumor proliferation by association with ACER/RAGE. Can bind to IL1-beta and signals through the IL1R1:IL1RAP receptor complex. Binding to class A CpG activates cytokine production in plasmacytoid dendritic cells implicating TLR9, MYD88 and AGER/RAGE and can activate autoreactive B cells. Via HMGB1-containing chromatin immune complexes may also promote B cell responses to endogenous TLR9 ligands through a B-cell receptor (BCR)-dependent and ACER/RAGE-independent mechanism. Inhibits phagocytosis of apoptotic cells by macrophages; the function is dependent on poly-ADP-ribosylation and involves binding to phosphatidylserine on the cell surface of apoptotic cells. In adaptive immunity may be involved in enhancing immunity through activation of effector T-cells and suppression of regulatory T (TReg) cells. In contrast, without implicating effector or regulatory T-cells, required for tumor infiltration and activation of T-cells expressing the lymphotoxin LTA:LTB heterotrimer thus promoting tumor malignant progression. Also reported to limit proliferation of T-cells. Released HMGB1:nucleosome complexes formed during apoptosis can signal through TLR2 to induce cytokine production. Involved in induction of immunological tolerance by apoptotic cells; its pro-inflammatory activities when released by apoptotic cells are neutralized by reactive oxygen species (ROS)-dependent oxidation specifically on Cys-106. During macrophage activation by activated lymphocyte-derived self apoptotic DNA (ALD-DNA) promotes recruitment of ALD-DNA to endosomes. The protein is High mobility group protein B1 (HMGB1) of Cricetulus griseus (Chinese hamster).